Reading from the N-terminus, the 483-residue chain is Probable cytochrome P450 517A4 (483 aa).

Residues Met1 to Lys21 traverse the membrane as a helical segment. Heme is bound at residue Cys429.

It belongs to the cytochrome P450 family. It depends on heme as a cofactor.

Its subcellular location is the membrane. The protein is Probable cytochrome P450 517A4 (cyp517A4) of Dictyostelium discoideum (Social amoeba).